Here is a 601-residue protein sequence, read N- to C-terminus: Aspartate--tRNA(Asp/Asn) ligase (601 aa).

Glu187 serves as a coordination point for L-aspartate. Residues 211-214 (QQFK) are aspartate. The L-aspartate site is built by Arg233 and His461. 233–235 (RDE) provides a ligand contact to ATP. Glu495 provides a ligand contact to ATP. Position 502 (Arg502) interacts with L-aspartate. 547-550 (GLDR) contacts ATP.

The protein belongs to the class-II aminoacyl-tRNA synthetase family. Type 1 subfamily. As to quaternary structure, homodimer.

It is found in the cytoplasm. The enzyme catalyses tRNA(Asx) + L-aspartate + ATP = L-aspartyl-tRNA(Asx) + AMP + diphosphate. Functionally, aspartyl-tRNA synthetase with relaxed tRNA specificity since it is able to aspartylate not only its cognate tRNA(Asp) but also tRNA(Asn). Reaction proceeds in two steps: L-aspartate is first activated by ATP to form Asp-AMP and then transferred to the acceptor end of tRNA(Asp/Asn). The polypeptide is Aspartate--tRNA(Asp/Asn) ligase (Pelodictyon phaeoclathratiforme (strain DSM 5477 / BU-1)).